A 213-amino-acid chain; its full sequence is 3-isopropylmalate dehydratase small subunit (213 aa).

This sequence belongs to the LeuD family. LeuD type 1 subfamily. In terms of assembly, heterodimer of LeuC and LeuD.

The catalysed reaction is (2R,3S)-3-isopropylmalate = (2S)-2-isopropylmalate. It functions in the pathway amino-acid biosynthesis; L-leucine biosynthesis; L-leucine from 3-methyl-2-oxobutanoate: step 2/4. In terms of biological role, catalyzes the isomerization between 2-isopropylmalate and 3-isopropylmalate, via the formation of 2-isopropylmaleate. In Neisseria meningitidis serogroup C / serotype 2a (strain ATCC 700532 / DSM 15464 / FAM18), this protein is 3-isopropylmalate dehydratase small subunit.